The primary structure comprises 407 residues: Serine hydroxymethyltransferase (407 aa).

(6S)-5,6,7,8-tetrahydrofolate-binding positions include Leu-120 and 124 to 126 (GHL). Residue Lys-229 is modified to N6-(pyridoxal phosphate)lysine.

Belongs to the SHMT family. As to quaternary structure, homodimer. It depends on pyridoxal 5'-phosphate as a cofactor.

The protein localises to the cytoplasm. The enzyme catalyses (6R)-5,10-methylene-5,6,7,8-tetrahydrofolate + glycine + H2O = (6S)-5,6,7,8-tetrahydrofolate + L-serine. It functions in the pathway one-carbon metabolism; tetrahydrofolate interconversion. It participates in amino-acid biosynthesis; glycine biosynthesis; glycine from L-serine: step 1/1. Catalyzes the reversible interconversion of serine and glycine with tetrahydrofolate (THF) serving as the one-carbon carrier. This reaction serves as the major source of one-carbon groups required for the biosynthesis of purines, thymidylate, methionine, and other important biomolecules. Also exhibits THF-independent aldolase activity toward beta-hydroxyamino acids, producing glycine and aldehydes, via a retro-aldol mechanism. This is Serine hydroxymethyltransferase from Deinococcus deserti (strain DSM 17065 / CIP 109153 / LMG 22923 / VCD115).